Reading from the N-terminus, the 238-residue chain is C-type lectin domain family 4 member A (238 aa).

The Cytoplasmic portion of the chain corresponds to 1–48; it reads MASEITYAEVKFKNESNSLHTYSESPAAPREKPIRDLRKPGSPSLLLT. The short motif at 5-10 is the ITIM motif element; sequence ITYAEV. Residues 49-69 form a helical; Signal-anchor for type II membrane protein membrane-spanning segment; that stretch reads SLMLLLLLLAITFLVAFIIYF. At 70 to 238 the chain is on the extracellular side; it reads QKYSQLLEEK…SVCQMKKINL (169 aa). N-linked (GlcNAc...) asparagine glycosylation is present at Asn91. A disulfide bridge connects residues Cys107 and Cys118. The C-type lectin domain maps to 126 to 233; it reads SSASWNKSEE…SLKQKSVCQM (108 aa). Asn131 and Asn136 each carry an N-linked (GlcNAc...) asparagine glycan. Intrachain disulfides connect Cys137-Cys231 and Cys205-Cys223. Residues Val146, Glu152, Glu197, Ser199, and Glu203 each coordinate Ca(2+). Alpha-D-mannopyranose is bound by residues 197 to 199 and Glu203; that span reads EPS. 209–211 is a binding site for N-acetyl-D-glucosamine; sequence IYR. Ca(2+) is bound by residues Asn219 and Asp220.

As to quaternary structure, may interact with PTPN6 via its ITIM site. Expressed in splenic antigen-presenting cells including B-cells, monocytes/macrophages, and dendritic cells (at protein level). Expressed in spleen and lymph node and slightly increased with dendritic cell maturation.

The protein resides in the cell membrane. May be involved in regulating immune reactivity. May play a role in modulating dendritic cells (DC) differentiation and/or maturation. May be involved in the inhibition of B-cell-receptor-mediated calcium mobilization and protein tyrosine phosphorylation. Functionally, C-type lectin receptor that binds carbohydrates mannose and fucose but also weakly interacts with N-acetylglucosamine (GlcNAc) in a Ca(2+)-dependent manner. Involved in regulating immune reactivity. Once triggered by antigen, it is internalized by clathrin-dependent endocytosis and delivers its antigenic cargo into the antigen presentation pathway resulting in cross-priming of CD8(+) T cells. This cross-presentation and cross-priming are enhanced by TLR7 and TLR8 agonists with increased expansion of the CD8(+) T cells, high production of IFNG and TNF with reduced levels of IL4, IL5 and IL13. In plasmacytoid dendritic cells, inhibits TLR9-mediated IFNA and TNF production. May be involved via its ITIM motif (immunoreceptor tyrosine-based inhibitory motifs) in the inhibition of B-cell-receptor-mediated calcium mobilization and protein tyrosine phosphorylation. In Mus musculus (Mouse), this protein is C-type lectin domain family 4 member A (Clec4a).